The primary structure comprises 267 residues: L-aspartate dehydrogenase (267 aa).

NAD(+) contacts are provided by alanine 124 and asparagine 190. Residue histidine 220 is part of the active site.

It belongs to the L-aspartate dehydrogenase family.

It catalyses the reaction L-aspartate + NADP(+) + H2O = oxaloacetate + NH4(+) + NADPH + H(+). The enzyme catalyses L-aspartate + NAD(+) + H2O = oxaloacetate + NH4(+) + NADH + H(+). It functions in the pathway cofactor biosynthesis; NAD(+) biosynthesis; iminoaspartate from L-aspartate (dehydrogenase route): step 1/1. Its function is as follows. Specifically catalyzes the NAD or NADP-dependent dehydrogenation of L-aspartate to iminoaspartate. The polypeptide is L-aspartate dehydrogenase (Ralstonia pickettii (strain 12J)).